Reading from the N-terminus, the 527-residue chain is Beta-glucosidase 19 (527 aa).

An N-terminal signal peptide occupies residues 1 to 21 (MKIPLLGLLLLISLVGSPTRA). Residues Q52 and H155 each contribute to the a beta-D-glucoside site. N183 carries N-linked (GlcNAc...) asparagine glycosylation. An a beta-D-glucoside-binding site is contributed by 200–201 (NE). The active-site Proton donor is the E201. Cysteines 220 and 231 form a disulfide. 2 residues coordinate a beta-D-glucoside: Y345 and E418. The Nucleophile role is filled by E418. The N-linked (GlcNAc...) asparagine glycan is linked to N462. Residues W469, 476-477 (EW), and F485 contribute to the a beta-D-glucoside site. A glycan (N-linked (GlcNAc...) asparagine) is linked at N495. A Prevents secretion from ER motif is present at residues 524–527 (HEEL).

This sequence belongs to the glycosyl hydrolase 1 family.

It is found in the endoplasmic reticulum lumen. It carries out the reaction Hydrolysis of terminal, non-reducing beta-D-glucosyl residues with release of beta-D-glucose.. This is Beta-glucosidase 19 from Arabidopsis thaliana (Mouse-ear cress).